The primary structure comprises 536 residues: Multicopper oxidase terE (536 aa).

Positions 1–21 are disordered; it reads MHWHGLSQSTAPFSDGSPQAS. Plastocyanin-like domains are found at residues 1-67, 79-238, and 354-488; these read MHWH…VEEK, ERIL…LSYN, and TVQK…VWMM. Residues His2, His4, His48, and His50 each coordinate Cu cation. Cu cation is bound at residue His397.

This sequence belongs to the multicopper oxidase family.

It participates in secondary metabolite biosynthesis. Its function is as follows. Multicopper oxidase; part of the gene cluster that mediates the biosynthesis of terrein, a fungal metabolite with ecological, antimicrobial, antiproliferative, and antioxidative activities. The first step in the pathway is performed by the polyketide synthase terA that produces 4-hydroxy-6-methylpyranon (4-HMP), orsellinic acid (OA), and 2,3-dehydro-6-hydroxymellein (2,3-dehydro-6-HM) by condensing acetyl-CoA with two, three, or four malonyl-CoA units, respectively. 4-HMP and OA are not pathway intermediates, but are rather shunt or side products. 2,3-dehydro-6-HM is further converted to 6-hydroxymellein (6-HM) by the 6-hydroxymellein synthase terB. The monooxygenases terC and terD, the multicopper oxidase terE and the Kelch-like protein terF are then involved in the transformation of 6-HM to terrein. Even if they are co-regulated with the other terrein cluster genes, terH and terI seem to be dispensable for terrein production; whereas one or both of the 2 transporters terG and terJ are probably required for efficient secretion of metabolites. The sequence is that of Multicopper oxidase terE from Aspergillus terreus (strain NIH 2624 / FGSC A1156).